The following is a 329-amino-acid chain: Glycerol-3-phosphate dehydrogenase [NAD(P)+] (329 aa).

The NADPH site is built by S13, W14, H34, and K105. Sn-glycerol 3-phosphate-binding residues include K105, G134, and S136. A138 provides a ligand contact to NADPH. 5 residues coordinate sn-glycerol 3-phosphate: K189, D242, S252, R253, and N254. The active-site Proton acceptor is K189. R253 serves as a coordination point for NADPH. Residues V277 and E279 each contribute to the NADPH site.

It belongs to the NAD-dependent glycerol-3-phosphate dehydrogenase family.

The protein resides in the cytoplasm. It carries out the reaction sn-glycerol 3-phosphate + NAD(+) = dihydroxyacetone phosphate + NADH + H(+). The catalysed reaction is sn-glycerol 3-phosphate + NADP(+) = dihydroxyacetone phosphate + NADPH + H(+). It participates in membrane lipid metabolism; glycerophospholipid metabolism. Its function is as follows. Catalyzes the reduction of the glycolytic intermediate dihydroxyacetone phosphate (DHAP) to sn-glycerol 3-phosphate (G3P), the key precursor for phospholipid synthesis. This chain is Glycerol-3-phosphate dehydrogenase [NAD(P)+], found in Legionella pneumophila (strain Corby).